Here is a 547-residue protein sequence, read N- to C-terminus: Probable ABC transporter periplasmic-binding protein SapA (547 aa).

The signal sequence occupies residues 1-21 (MRQVLSSLLVIAGLVSGQAIA).

This sequence belongs to the bacterial solute-binding protein 5 family.

It localises to the periplasm. Not part of a putrescine export system. Very similar to a S.typhimurium protein implicated in antimicrobial peptide resistance, but the SapBCDF operon in E.coli is implicated in putrescine export. The polypeptide is Probable ABC transporter periplasmic-binding protein SapA (sapA) (Escherichia coli (strain K12)).